The chain runs to 65 residues: Hirudin-2B (65 aa).

Residues 1–3 (ITY) form an interaction with thrombin active site region. Intrachain disulfides connect Cys-6–Cys-14, Cys-16–Cys-28, and Cys-22–Cys-39. The tract at residues 39–65 (CVTGEGTPKPQSHNDGDFEEIPEEYLQ) is disordered. Thr-45 carries O-linked (GalNAc...) threonine glycosylation. The tract at residues 55-65 (DFEEIPEEYLQ) is interaction with fibrinogen-binding exosite of thrombin. A compositionally biased stretch (acidic residues) spans 55–65 (DFEEIPEEYLQ). Tyr-63 carries the post-translational modification Sulfotyrosine.

This sequence belongs to the protease inhibitor I14 (hirudin) family.

Its subcellular location is the secreted. Functionally, hirudin is a potent thrombin-specific protease inhibitor. It forms a stable non-covalent complex with alpha-thrombin, thereby abolishing its ability to cleave fibrinogen. This is Hirudin-2B from Hirudo medicinalis (Medicinal leech).